The chain runs to 340 residues: Delta-aminolevulinic acid dehydratase (340 aa).

Zn(2+) contacts are provided by Cys133, Cys135, and Cys143. Lys210 acts as the Schiff-base intermediate with substrate in catalysis. Residues Arg220 and Arg232 each contribute to the 5-aminolevulinate site. Residue Lys263 is the Schiff-base intermediate with substrate of the active site. Residues Ser290 and Tyr329 each contribute to the 5-aminolevulinate site.

It belongs to the ALAD family. Homooctamer. Requires Zn(2+) as cofactor.

It carries out the reaction 2 5-aminolevulinate = porphobilinogen + 2 H2O + H(+). It participates in porphyrin-containing compound metabolism; protoporphyrin-IX biosynthesis; coproporphyrinogen-III from 5-aminolevulinate: step 1/4. Catalyzes an early step in the biosynthesis of tetrapyrroles. Binds two molecules of 5-aminolevulinate per subunit, each at a distinct site, and catalyzes their condensation to form porphobilinogen. This Candida glabrata (strain ATCC 2001 / BCRC 20586 / JCM 3761 / NBRC 0622 / NRRL Y-65 / CBS 138) (Yeast) protein is Delta-aminolevulinic acid dehydratase (HEM2).